A 208-amino-acid chain; its full sequence is Small ribosomal subunit protein uS4 (208 aa).

Residues 95–157 form the S4 RNA-binding domain; sequence RRIDNIVYRA…DSLKKLVRSN (63 aa).

The protein belongs to the universal ribosomal protein uS4 family. In terms of assembly, part of the 30S ribosomal subunit. Contacts protein S5. The interaction surface between S4 and S5 is involved in control of translational fidelity.

Functionally, one of the primary rRNA binding proteins, it binds directly to 16S rRNA where it nucleates assembly of the body of the 30S subunit. Its function is as follows. With S5 and S12 plays an important role in translational accuracy. This chain is Small ribosomal subunit protein uS4, found in Borrelia duttonii (strain Ly).